Reading from the N-terminus, the 292-residue chain is 4-hydroxy-tetrahydrodipicolinate synthase (292 aa).

Pyruvate is bound at residue T45. Y133 serves as the catalytic Proton donor/acceptor. K161 functions as the Schiff-base intermediate with substrate in the catalytic mechanism. I203 contacts pyruvate.

Belongs to the DapA family. Homodimer.

Its subcellular location is the cytoplasm. It catalyses the reaction L-aspartate 4-semialdehyde + pyruvate = (2S,4S)-4-hydroxy-2,3,4,5-tetrahydrodipicolinate + H2O + H(+). The protein operates within amino-acid biosynthesis; L-lysine biosynthesis via DAP pathway; (S)-tetrahydrodipicolinate from L-aspartate: step 3/4. In terms of biological role, catalyzes the condensation of (S)-aspartate-beta-semialdehyde [(S)-ASA] and pyruvate to 4-hydroxy-tetrahydrodipicolinate (HTPA). The sequence is that of 4-hydroxy-tetrahydrodipicolinate synthase from Stutzerimonas stutzeri (strain A1501) (Pseudomonas stutzeri).